The sequence spans 323 residues: Small ribosomal subunit protein mS35 (323 aa).

Residues 31 to 59 form a disordered region; it reads PVPTPSLPERTPGNERPPRRKALPPRTEK. The stretch at 257–321 forms a coiled coil; the sequence is SSERNILETL…YKESVKRLLN (65 aa).

The protein belongs to the mitochondrion-specific ribosomal protein mS35 family. Component of the mitochondrial small ribosomal subunit (mt-SSU). Mature mammalian 55S mitochondrial ribosomes consist of a small (28S) and a large (39S) subunit. The 28S small subunit contains a 12S ribosomal RNA (12S mt-rRNA) and 30 different proteins. The 39S large subunit contains a 16S rRNA (16S mt-rRNA), a copy of mitochondrial valine transfer RNA (mt-tRNA(Val)), which plays an integral structural role, and 52 different proteins.

The protein localises to the mitochondrion. The sequence is that of Small ribosomal subunit protein mS35 from Homo sapiens (Human).